Reading from the N-terminus, the 428-residue chain is tRNA modification GTPase MnmE (428 aa).

(6S)-5-formyl-5,6,7,8-tetrahydrofolate contacts are provided by arginine 20, glutamate 77, and lysine 117. Residues 213-351 (GFEIALVGAP…LLEKIRSVFS (139 aa)) enclose the TrmE-type G domain. Asparagine 223 serves as a coordination point for K(+). GTP-binding positions include 223–228 (NAGKST), 242–248 (SEIAGTT), and 267–270 (DTAG). Position 227 (serine 227) interacts with Mg(2+). 3 residues coordinate K(+): serine 242, isoleucine 244, and threonine 247. Position 248 (threonine 248) interacts with Mg(2+). A (6S)-5-formyl-5,6,7,8-tetrahydrofolate-binding site is contributed by lysine 428.

This sequence belongs to the TRAFAC class TrmE-Era-EngA-EngB-Septin-like GTPase superfamily. TrmE GTPase family. Homodimer. Heterotetramer of two MnmE and two MnmG subunits. K(+) is required as a cofactor.

Its subcellular location is the cytoplasm. Its function is as follows. Exhibits a very high intrinsic GTPase hydrolysis rate. Involved in the addition of a carboxymethylaminomethyl (cmnm) group at the wobble position (U34) of certain tRNAs, forming tRNA-cmnm(5)s(2)U34. The polypeptide is tRNA modification GTPase MnmE (Roseobacter denitrificans (strain ATCC 33942 / OCh 114) (Erythrobacter sp. (strain OCh 114))).